Reading from the N-terminus, the 478-residue chain is Cytochrome c-552 (478 aa).

The signal sequence occupies residues 1–26 (MARKTLRARRFFSLIFPFFFITSVYA). Heme c is bound at residue histidine 94. Residues cysteine 122, cysteine 125, and lysine 126 each contribute to the heme site. Residues cysteine 160, cysteine 163, histidine 164, cysteine 209, cysteine 212, and histidine 213 each contribute to the heme c site. The Ca(2+) site is built by glutamate 215, tyrosine 216, lysine 261, and glutamine 263. Residue tyrosine 216 coordinates substrate. Histidine 264 provides a ligand contact to substrate. Histidine 275, cysteine 282, cysteine 285, histidine 286, histidine 301, cysteine 314, cysteine 317, histidine 318, and histidine 393 together coordinate heme c.

It belongs to the cytochrome c-552 family. Ca(2+) is required as a cofactor. Heme c serves as cofactor.

The protein resides in the periplasm. It carries out the reaction 6 Fe(III)-[cytochrome c] + NH4(+) + 2 H2O = 6 Fe(II)-[cytochrome c] + nitrite + 8 H(+). It participates in nitrogen metabolism; nitrate reduction (assimilation). Catalyzes the reduction of nitrite to ammonia, consuming six electrons in the process. In Salmonella gallinarum (strain 287/91 / NCTC 13346), this protein is Cytochrome c-552.